The following is a 563-amino-acid chain: 3-oxosteroid 1-dehydrogenase (563 aa).

Position 7–36 (7–36 (DVVVVGSGAAGMVAALVAAHRGLSTVVVEK)) interacts with FAD.

This sequence belongs to the FAD-dependent oxidoreductase 2 family. 3-oxosteroid dehydrogenase subfamily. The cofactor is FAD.

It carries out the reaction a 3-oxosteroid + A = a 3-oxo-Delta(1)-steroid + AH2. The catalysed reaction is a 3-oxo-Delta(4)-steroid + A = a 3-oxo-Delta(1,4)-steroid + AH2. It catalyses the reaction 3-oxochol-4-en-22-oyl-CoA + NAD(+) = 3-oxochola-1,4-dien-22-oyl-CoA + NADH + H(+). Involved in the degradation of cholesterol. Catalyzes the elimination of the C-1 and C-2 hydrogen atoms of the A-ring from the polycyclic ring structure of 3-ketosteroids. Has a clear preference for 3-ketosteroids with a saturated A-ring, displaying highest activity on 5alpha-AD (5alpha-androstane-3,17-dione) and 5alpha-T (5alpha-testosterone, also known as 17beta-hydroxy-5alpha-androstane-3-one). Is also involved in the formation of 3-keto-1,4-diene-steroid from 3-keto-4-ene-steroid. Catalyzes the conversion of 3-oxo-23,24-bisnorchol-4-en-22-oyl-coenzyme A thioester (4-BNC-CoA) to 3-oxo-23,24-bisnorchola-1,4-dien-22-oyl-coenzyme A thioester (1,4-BNC-CoA). This chain is 3-oxosteroid 1-dehydrogenase (kstD), found in Mycobacterium tuberculosis (strain ATCC 25618 / H37Rv).